Reading from the N-terminus, the 397-residue chain is Multidrug resistance protein MdtH (397 aa).

Helical transmembrane passes span Trp-11–Ile-31, Phe-71–Leu-91, Ala-94–Phe-114, Leu-137–Leu-157, Tyr-163–Leu-183, Leu-211–Ile-231, Ala-242–Ala-262, Phe-291–Ile-311, Leu-338–Ala-358, and Leu-366–Phe-386.

This sequence belongs to the major facilitator superfamily. DHA1 family. MdtH (TC 2.A.1.2.21) subfamily.

It is found in the cell inner membrane. The sequence is that of Multidrug resistance protein MdtH from Aeromonas salmonicida (strain A449).